A 460-amino-acid polypeptide reads, in one-letter code: ATP synthase subunit beta (460 aa).

An ATP-binding site is contributed by 150–157 (GGAGVGKT).

The protein belongs to the ATPase alpha/beta chains family. As to quaternary structure, F-type ATPases have 2 components, CF(1) - the catalytic core - and CF(0) - the membrane proton channel. CF(1) has five subunits: alpha(3), beta(3), gamma(1), delta(1), epsilon(1). CF(0) has three main subunits: a(1), b(2) and c(9-12). The alpha and beta chains form an alternating ring which encloses part of the gamma chain. CF(1) is attached to CF(0) by a central stalk formed by the gamma and epsilon chains, while a peripheral stalk is formed by the delta and b chains.

It is found in the cell inner membrane. It catalyses the reaction ATP + H2O + 4 H(+)(in) = ADP + phosphate + 5 H(+)(out). Its function is as follows. Produces ATP from ADP in the presence of a proton gradient across the membrane. The catalytic sites are hosted primarily by the beta subunits. The protein is ATP synthase subunit beta of Salmonella agona (strain SL483).